The sequence spans 57 residues: Small ribosomal subunit protein bS21 (57 aa).

Basic and acidic residues predominate over residues 32–42 (VRRREHYEKPS). The disordered stretch occupies residues 32-57 (VRRREHYEKPSQRRKRKLEASRRRRR). Residues 43 to 57 (QRRKRKLEASRRRRR) are compositionally biased toward basic residues.

Belongs to the bacterial ribosomal protein bS21 family.

This chain is Small ribosomal subunit protein bS21, found in Synechococcus elongatus (strain ATCC 33912 / PCC 7942 / FACHB-805) (Anacystis nidulans R2).